A 136-amino-acid polypeptide reads, in one-letter code: Small ribosomal subunit protein uS11c (136 aa).

It belongs to the universal ribosomal protein uS11 family. Part of the 30S ribosomal subunit.

It is found in the plastid. The protein resides in the chloroplast. The protein is Small ribosomal subunit protein uS11c of Helianthus annuus (Common sunflower).